Reading from the N-terminus, the 159-residue chain is Ribosomal RNA large subunit methyltransferase H (159 aa).

S-adenosyl-L-methionine-binding positions include Leu-76, Gly-108, and 127–132 (FGLLTL).

This sequence belongs to the RNA methyltransferase RlmH family. In terms of assembly, homodimer.

It is found in the cytoplasm. The enzyme catalyses pseudouridine(1915) in 23S rRNA + S-adenosyl-L-methionine = N(3)-methylpseudouridine(1915) in 23S rRNA + S-adenosyl-L-homocysteine + H(+). Functionally, specifically methylates the pseudouridine at position 1915 (m3Psi1915) in 23S rRNA. This Streptococcus equi subsp. zooepidemicus (strain MGCS10565) protein is Ribosomal RNA large subunit methyltransferase H.